Consider the following 1003-residue polypeptide: Retinoblastoma-related protein 1 (1003 aa).

Residues 405-607 (TPVSTAMTTA…EKGSSMYNSL (203 aa)) form a domain A region. The segment at 405–860 (TPVSTAMTTA…NEMFIPSVKP (456 aa)) is pocket. Positions 608–729 (AVAKPSLAAE…PGGGGETCAE (122 aa)) are spacer. The interval 730-860 (TAINVFFGKI…NEMFIPSVKP (131 aa)) is domain B. Residues 868-899 (AGNNSEKNDHNDGQGPASPKPSPFPKLPDMSP) are disordered.

The protein belongs to the retinoblastoma protein (RB) family. As to expression, expressed in roots, stems, leaves and flowers.

Its subcellular location is the nucleus. Regulator of biological processes that recruits a histone deacetylase to control gene transcription. Formation of stable complexes with geminiviridae replication-associated proteins may create a cellular environment which favors viral DNA replication. May play a role in the entry into mitosis, negatively regulating the cell proliferation during leaf, stem, and flower development. Critical regulator of the endocycle. The chain is Retinoblastoma-related protein 1 (RBR1) from Nicotiana benthamiana.